Consider the following 546-residue polypeptide: 2-isopropylmalate synthase (546 aa).

Residues 5–274 (ITIFDTTLRD…TADVHTEHLT (270 aa)) enclose the Pyruvate carboxyltransferase domain. Mn(2+)-binding residues include D14, H209, H211, and N245. The interval 415 to 546 (RLDQFSVHLS…QNGIMHTYGE (132 aa)) is regulatory domain.

This sequence belongs to the alpha-IPM synthase/homocitrate synthase family. LeuA type 1 subfamily. In terms of assembly, homodimer. Mn(2+) serves as cofactor.

Its subcellular location is the cytoplasm. The enzyme catalyses 3-methyl-2-oxobutanoate + acetyl-CoA + H2O = (2S)-2-isopropylmalate + CoA + H(+). It functions in the pathway amino-acid biosynthesis; L-leucine biosynthesis; L-leucine from 3-methyl-2-oxobutanoate: step 1/4. In terms of biological role, catalyzes the condensation of the acetyl group of acetyl-CoA with 3-methyl-2-oxobutanoate (2-ketoisovalerate) to form 3-carboxy-3-hydroxy-4-methylpentanoate (2-isopropylmalate). The polypeptide is 2-isopropylmalate synthase (Salinibacter ruber (strain M8)).